Here is a 470-residue protein sequence, read N- to C-terminus: Uronate isomerase (470 aa).

This sequence belongs to the metallo-dependent hydrolases superfamily. Uronate isomerase family.

It catalyses the reaction D-glucuronate = D-fructuronate. The enzyme catalyses aldehydo-D-galacturonate = keto-D-tagaturonate. It participates in carbohydrate metabolism; pentose and glucuronate interconversion. This Escherichia coli O17:K52:H18 (strain UMN026 / ExPEC) protein is Uronate isomerase.